The following is a 155-amino-acid chain: Small ribosomal subunit protein uS7cz/uS7cy (155 aa).

It belongs to the universal ribosomal protein uS7 family. Part of the 30S ribosomal subunit.

Its subcellular location is the plastid. The protein localises to the chloroplast. In terms of biological role, one of the primary rRNA binding proteins, it binds directly to 16S rRNA where it nucleates assembly of the head domain of the 30S subunit. In Atropa belladonna (Belladonna), this protein is Small ribosomal subunit protein uS7cz/uS7cy (rps7-A).